Reading from the N-terminus, the 340-residue chain is S-adenosylmethionine:tRNA ribosyltransferase-isomerase (340 aa).

It belongs to the QueA family. In terms of assembly, monomer.

It localises to the cytoplasm. It carries out the reaction 7-aminomethyl-7-carbaguanosine(34) in tRNA + S-adenosyl-L-methionine = epoxyqueuosine(34) in tRNA + adenine + L-methionine + 2 H(+). The protein operates within tRNA modification; tRNA-queuosine biosynthesis. Functionally, transfers and isomerizes the ribose moiety from AdoMet to the 7-aminomethyl group of 7-deazaguanine (preQ1-tRNA) to give epoxyqueuosine (oQ-tRNA). This is S-adenosylmethionine:tRNA ribosyltransferase-isomerase from Vesicomyosocius okutanii subsp. Calyptogena okutanii (strain HA).